A 473-amino-acid polypeptide reads, in one-letter code: Tyrosine phenol-lyase (473 aa).

K257 carries the N6-(pyridoxal phosphate)lysine modification.

The protein belongs to the beta-eliminating lyase family. As to quaternary structure, homotetramer. The cofactor is pyridoxal 5'-phosphate.

The enzyme catalyses L-tyrosine + H2O = phenol + pyruvate + NH4(+). In Intrasporangium calvum (strain ATCC 23552 / DSM 43043 / JCM 3097 / NBRC 12989 / NCIMB 10167 / NRRL B-3866 / 7 KIP), this protein is Tyrosine phenol-lyase.